Consider the following 112-residue polypeptide: MEDKEELRKLLRSMMRKSTDPRTKMQDEYLTDEDKAIQRSERPPAKKRACKDCTCGLKEEQEVRTRSACGNCYKGDAFRCSGCPSLGLPPYEPGDVVSFSMDLSNEFQGEDA.

Residues Arg-8 to Ala-112 form a disordered region. The [4Fe-4S] cluster site is built by Cys-69, Cys-72, Cys-80, and Cys-83. Short sequence motifs (cx2C motif) lie at residues Cys-69 to Cys-72 and Cys-80 to Cys-83. The tract at residues Cys-69–Cys-83 is fe-S binding site B.

The protein belongs to the anamorsin family. In terms of assembly, monomer. Interacts with TAH18. Interacts with MIA40. Requires [4Fe-4S] cluster as cofactor.

The protein resides in the cytoplasm. The protein localises to the mitochondrion intermembrane space. Functionally, component of the cytosolic iron-sulfur (Fe-S) protein assembly (CIA) machinery required for the maturation of extramitochondrial Fe-S proteins. Part of an electron transfer chain functioning in an early step of cytosolic Fe-S biogenesis, facilitating the de novo assembly of a [4Fe-4S] cluster on the scaffold complex CFD1-NBP35. Electrons are transferred to DRE2 from NADPH via the FAD- and FMN-containing protein TAH18. TAH18-DRE2 are also required for the assembly of the diferric tyrosyl radical cofactor of ribonucleotide reductase (RNR), probably by providing electrons for reduction during radical cofactor maturation in the catalytic small subunit RNR2. The sequence is that of Fe-S cluster assembly protein DRE2 (DRE2) from Encephalitozoon cuniculi (strain GB-M1) (Microsporidian parasite).